Here is a 294-residue protein sequence, read N- to C-terminus: uncharacterized protein (294 aa).

The protein belongs to the glycosyltransferase 2 family.

This is an uncharacterized protein from Haemophilus influenzae (strain ATCC 51907 / DSM 11121 / KW20 / Rd).